Reading from the N-terminus, the 166-residue chain is Cofilin-2 (166 aa).

An ADF-H domain is found at 4–153 (GVTVNDEVIK…KDRSTLGEKL (150 aa)). A Phosphoserine modification is found at Ser-24. The short motif at 30–34 (KKRKK) is the Nuclear localization signal element.

This sequence belongs to the actin-binding proteins ADF family. Post-translationally, the phosphorylation of Ser-24 may prevent recognition of the nuclear localization signal. In terms of tissue distribution, widely distributed in various tissues.

The protein localises to the nucleus matrix. It is found in the cytoplasm. Its subcellular location is the cytoskeleton. Its function is as follows. Controls reversibly actin polymerization and depolymerization in a pH-sensitive manner. It has the ability to bind G- and F-actin in a 1:1 ratio of cofilin to actin. It is the major component of intranuclear and cytoplasmic actin rods. This chain is Cofilin-2 (CFL2), found in Gallus gallus (Chicken).